Consider the following 500-residue polypeptide: L-arabinose isomerase (500 aa).

Residues Glu306, Glu333, His349, and His448 each coordinate Mn(2+).

It belongs to the arabinose isomerase family. Mn(2+) is required as a cofactor.

The enzyme catalyses beta-L-arabinopyranose = L-ribulose. It functions in the pathway carbohydrate degradation; L-arabinose degradation via L-ribulose; D-xylulose 5-phosphate from L-arabinose (bacterial route): step 1/3. In terms of biological role, catalyzes the conversion of L-arabinose to L-ribulose. The polypeptide is L-arabinose isomerase (Shewanella sp. (strain ANA-3)).